Reading from the N-terminus, the 383-residue chain is Inactive serine protease 54 (383 aa).

Residues 1–20 (MAEMRGMLLMLLYISHSSSA) form the signal peptide. The Peptidase S1 domain maps to 21–258 (ICGIQKATIA…YSDWITAKTR (238 aa)). Asn113 carries N-linked (GlcNAc...) asparagine glycosylation. Cystine bridges form between Cys154–Cys216, Cys185–Cys195, and Cys206–Cys237. Positions 305-334 (QGQRMSTKSNKQKDAGQNFRVNRQPETSGP) are disordered. The span at 323 to 334 (FRVNRQPETSGP) shows a compositional bias: polar residues.

This sequence belongs to the peptidase S1 family. Plasma kallikrein subfamily.

The protein resides in the secreted. In Mus musculus (Mouse), this protein is Inactive serine protease 54 (Prss54).